Here is a 206-residue protein sequence, read N- to C-terminus: MFSRFATRYNALFEKAPIMTMCLTAGTLGGISDAVAQGLTIYQTNKNAMIGLDGVRLNTHPEIPSIKRVLQFVTFGFAISPFQFRWLRLLSAKFPIEKGAINVVKRVLLDQAVFAPFGTAFFFSWMTLAEGKGFRGAYDKLQAVFWPTLKANYMVWPFFQTVNFWLMPLQYQMPFACTVAIFWNIFLSLKNASSMQESGSQEIELF.

The next 2 membrane-spanning stretches (helical) occupy residues 107 to 127 (VLLD…SWMT) and 169 to 189 (LQYQ…FLSL).

The protein belongs to the peroxisomal membrane protein PXMP2/4 family.

It localises to the mitochondrion inner membrane. This chain is Protein sym1 (sym1), found in Schizosaccharomyces pombe (strain 972 / ATCC 24843) (Fission yeast).